We begin with the raw amino-acid sequence, 84 residues long: Short neurotoxin SNTX-1 (84 aa).

An N-terminal signal peptide occupies residues 1–21 (MKTLLLILVVVTIVCLDLVCC). 4 disulfides stabilise this stretch: cysteine 25–cysteine 46, cysteine 39–cysteine 63, cysteine 65–cysteine 76, and cysteine 77–cysteine 82.

It belongs to the three-finger toxin family. Short-chain subfamily. Type I alpha-neurotoxin sub-subfamily. In terms of tissue distribution, expressed by the venom gland.

The protein resides in the secreted. Its function is as follows. Binds to muscle nicotinic acetylcholine receptor (nAChR) and inhibit acetylcholine from binding to the receptor, thereby impairing neuromuscular transmission. The sequence is that of Short neurotoxin SNTX-1 from Demansia vestigiata (Lesser black whip snake).